A 418-amino-acid chain; its full sequence is Glutamate-1-semialdehyde 2,1-aminomutase (418 aa).

Lysine 262 carries the post-translational modification N6-(pyridoxal phosphate)lysine.

It belongs to the class-III pyridoxal-phosphate-dependent aminotransferase family. HemL subfamily. Requires pyridoxal 5'-phosphate as cofactor.

It localises to the cytoplasm. The enzyme catalyses (S)-4-amino-5-oxopentanoate = 5-aminolevulinate. Its pathway is porphyrin-containing compound metabolism; protoporphyrin-IX biosynthesis; 5-aminolevulinate from L-glutamyl-tRNA(Glu): step 2/2. This Archaeoglobus fulgidus (strain ATCC 49558 / DSM 4304 / JCM 9628 / NBRC 100126 / VC-16) protein is Glutamate-1-semialdehyde 2,1-aminomutase (hemL).